A 147-amino-acid chain; its full sequence is Hemoglobin subunit gamma-1 (147 aa).

Glycine 2 carries the N-acetylglycine modification. Residues 3–147 form the Globin domain; that stretch reads HFTEEDKATI…VASALSSRYH (145 aa). Residue threonine 13 is modified to Phosphothreonine. Phosphoserine occurs at positions 45, 51, and 53. At lysine 60 the chain carries N6-acetyllysine. A heme b-binding site is contributed by histidine 64. At lysine 83 the chain carries N6-acetyllysine. Residue histidine 93 coordinates heme b. Residue cysteine 94 is modified to S-nitrosocysteine. Serine 140 is subject to Phosphoserine.

Belongs to the globin family. As to quaternary structure, heterotetramer of two alpha chains and two gamma chains in fetal hemoglobin (Hb F). The ratio of gamma-G to gamma-A chains in is approximately 2:1 in infant chimpanzee, and 1:2 in the adult. As to expression, red blood cells.

Its function is as follows. Gamma chains make up the fetal hemoglobin F, in combination with alpha chains. This Pan troglodytes (Chimpanzee) protein is Hemoglobin subunit gamma-1 (HBG1).